The sequence spans 331 residues: Geranylgeranyl transferase type-2 subunit beta (331 aa).

The residue at position 2 (Gly2) is an N-acetylglycine. At Thr3 the chain carries Phosphothreonine. 6 PFTB repeats span residues 20–61 (LEKH…DLMG), 68–109 (REEI…TLYD), 116–157 (INKV…ALLG), 164–205 (VEKA…AITS), 212–253 (SDLL…KIIG), and 260–302 (REKL…SLLG). Residue 190–192 (HAG) participates in geranylgeranyl diphosphate binding. Zn(2+) contacts are provided by Asp238 and Cys240. Residue 241 to 244 (YSWW) coordinates geranylgeranyl diphosphate. His290 is a Zn(2+) binding site.

It belongs to the protein prenyltransferase subunit beta family. As to quaternary structure, heterotrimer composed of RABGGTA, RABGGTB and CHM; within this trimer, RABGGTA and RABGGTB form the catalytic component B, while CHM (component A) mediates peptide substrate binding. The Rab GGTase dimer (RGGT) interacts with CHM (component A) prior to Rab protein binding; the association is stabilized by geranylgeranyl pyrophosphate (GGpp). The CHM:RGGT:Rab complex is destabilized by GGpp. Interaction of RABGGTB with prenylated PTP4A2 precludes its association with RABGGTA and inhibits enzyme activity. Interacts with CHODL. Interacts with non-phosphorylated form of RAB8A; phosphorylation of RAB8A at 'Thr-72' disrupts this interaction. The cofactor is Zn(2+).

The catalysed reaction is geranylgeranyl diphosphate + L-cysteinyl-[protein] = S-geranylgeranyl-L-cysteinyl-[protein] + diphosphate. With respect to regulation, the enzymatic reaction requires the aid of a Rab escort protein (also called component A). Functionally, catalyzes the transfer of a geranylgeranyl moiety from geranylgeranyl diphosphate to both cysteines of Rab proteins with the C-terminal sequence -XXCC, -XCXC and -CCXX, such as RAB1A, RAB3A, RAB5A and RAB7A. This Bos taurus (Bovine) protein is Geranylgeranyl transferase type-2 subunit beta (RABGGTB).